We begin with the raw amino-acid sequence, 224 residues long: Elongation factor Ts (224 aa).

The tract at residues 81–84 (TDFV) is involved in Mg(2+) ion dislocation from EF-Tu.

This sequence belongs to the EF-Ts family.

It is found in the cytoplasm. In terms of biological role, associates with the EF-Tu.GDP complex and induces the exchange of GDP to GTP. It remains bound to the aminoacyl-tRNA.EF-Tu.GTP complex up to the GTP hydrolysis stage on the ribosome. This chain is Elongation factor Ts, found in Finegoldia magna (strain ATCC 29328 / DSM 20472 / WAL 2508) (Peptostreptococcus magnus).